Consider the following 386-residue polypeptide: Putative nickel insertion protein (386 aa).

It belongs to the LarC family.

The protein is Putative nickel insertion protein of Dictyoglomus thermophilum (strain ATCC 35947 / DSM 3960 / H-6-12).